A 618-amino-acid chain; its full sequence is UvrABC system protein C (618 aa).

The region spanning 15–93 (RTPGVYLMKD…IKEHHPRYNI (79 aa)) is the GIY-YIG domain. A UVR domain is found at 203 to 238 (NNLLRELRERMKMAAEQMNYEEAAFLRDRIRAIEET).

It belongs to the UvrC family. Interacts with UvrB in an incision complex.

The protein resides in the cytoplasm. Functionally, the UvrABC repair system catalyzes the recognition and processing of DNA lesions. UvrC both incises the 5' and 3' sides of the lesion. The N-terminal half is responsible for the 3' incision and the C-terminal half is responsible for the 5' incision. In Syntrophus aciditrophicus (strain SB), this protein is UvrABC system protein C.